The following is a 151-amino-acid chain: 3-dehydroquinate dehydratase (151 aa).

The active-site Proton acceptor is Tyr26. Positions 75, 81, and 88 each coordinate substrate. Catalysis depends on His101, which acts as the Proton donor. Substrate-binding positions include 102-103 (LS) and Arg112.

It belongs to the type-II 3-dehydroquinase family. Homododecamer.

The enzyme catalyses 3-dehydroquinate = 3-dehydroshikimate + H2O. Its pathway is metabolic intermediate biosynthesis; chorismate biosynthesis; chorismate from D-erythrose 4-phosphate and phosphoenolpyruvate: step 3/7. Its function is as follows. Catalyzes a trans-dehydration via an enolate intermediate. This Shewanella halifaxensis (strain HAW-EB4) protein is 3-dehydroquinate dehydratase.